We begin with the raw amino-acid sequence, 634 residues long: DNA-directed RNA polymerase subunit gamma (634 aa).

Zn(2+) contacts are provided by C74, C76, C89, and C92. Mg(2+) contacts are provided by D471, D473, and D475.

It belongs to the RNA polymerase beta' chain family. RpoC1 subfamily. In cyanobacteria the RNAP catalytic core is composed of 2 alpha, 1 beta, 1 beta', 1 gamma and 1 omega subunit. When a sigma factor is associated with the core the holoenzyme is formed, which can initiate transcription. Requires Mg(2+) as cofactor. Zn(2+) serves as cofactor.

It carries out the reaction RNA(n) + a ribonucleoside 5'-triphosphate = RNA(n+1) + diphosphate. Functionally, DNA-dependent RNA polymerase catalyzes the transcription of DNA into RNA using the four ribonucleoside triphosphates as substrates. The polypeptide is DNA-directed RNA polymerase subunit gamma (Prochlorococcus marinus (strain MIT 9312)).